The sequence spans 624 residues: DNA mismatch repair protein MutL (624 aa).

Belongs to the DNA mismatch repair MutL/HexB family.

This protein is involved in the repair of mismatches in DNA. It is required for dam-dependent methyl-directed DNA mismatch repair. May act as a 'molecular matchmaker', a protein that promotes the formation of a stable complex between two or more DNA-binding proteins in an ATP-dependent manner without itself being part of a final effector complex. This Chlorobium phaeobacteroides (strain DSM 266 / SMG 266 / 2430) protein is DNA mismatch repair protein MutL.